Reading from the N-terminus, the 201-residue chain is Glycerol-3-phosphate acyltransferase (201 aa).

5 helical membrane-spanning segments follow: residues 10–30 (ALILTGVLGYLLGSIPFGIVI), 59–79 (PAALATLLLDSGKGAIAVLIA), 87–107 (AAQLAAFTSFLGHLFPVWLGF), 116–136 (FLGTLLALAWPVGLACCLTWL), and 161–181 (ILLGYGQMAALGAVLAVLIFI).

It belongs to the PlsY family. As to quaternary structure, probably interacts with PlsX.

The protein localises to the cell inner membrane. It catalyses the reaction an acyl phosphate + sn-glycerol 3-phosphate = a 1-acyl-sn-glycero-3-phosphate + phosphate. Its pathway is lipid metabolism; phospholipid metabolism. Its function is as follows. Catalyzes the transfer of an acyl group from acyl-phosphate (acyl-PO(4)) to glycerol-3-phosphate (G3P) to form lysophosphatidic acid (LPA). This enzyme utilizes acyl-phosphate as fatty acyl donor, but not acyl-CoA or acyl-ACP. This chain is Glycerol-3-phosphate acyltransferase, found in Cereibacter sphaeroides (strain ATCC 17029 / ATH 2.4.9) (Rhodobacter sphaeroides).